The primary structure comprises 135 residues: FK506-binding protein 2 (135 aa).

The signal sequence occupies residues Met-1–Ala-17. The PPIase FKBP-type domain maps to Gly-40–Ala-127. Positions His-132–Leu-135 match the Prevents secretion from ER motif.

Belongs to the FKBP-type PPIase family. FKBP2 subfamily.

It is found in the endoplasmic reticulum. The enzyme catalyses [protein]-peptidylproline (omega=180) = [protein]-peptidylproline (omega=0). Its activity is regulated as follows. Inhibited by both FK506 and rapamycin. In terms of biological role, PPIases accelerate the folding of proteins. It catalyzes the cis-trans isomerization of proline imidic peptide bonds in oligopeptides. The protein is FK506-binding protein 2 (FPR2) of Debaryomyces hansenii (strain ATCC 36239 / CBS 767 / BCRC 21394 / JCM 1990 / NBRC 0083 / IGC 2968) (Yeast).